The chain runs to 189 residues: Protein GrpE (189 aa).

The disordered stretch occupies residues 1–21 (MADEQNLDNQNPETPEQSQAD). Residues 7–20 (LDNQNPETPEQSQA) show a composition bias toward polar residues.

This sequence belongs to the GrpE family. Homodimer.

Its subcellular location is the cytoplasm. In terms of biological role, participates actively in the response to hyperosmotic and heat shock by preventing the aggregation of stress-denatured proteins, in association with DnaK and GrpE. It is the nucleotide exchange factor for DnaK and may function as a thermosensor. Unfolded proteins bind initially to DnaJ; upon interaction with the DnaJ-bound protein, DnaK hydrolyzes its bound ATP, resulting in the formation of a stable complex. GrpE releases ADP from DnaK; ATP binding to DnaK triggers the release of the substrate protein, thus completing the reaction cycle. Several rounds of ATP-dependent interactions between DnaJ, DnaK and GrpE are required for fully efficient folding. This Stutzerimonas stutzeri (strain A1501) (Pseudomonas stutzeri) protein is Protein GrpE.